The chain runs to 550 residues: Glucose-6-phosphate isomerase (550 aa).

Glutamate 356 serves as the catalytic Proton donor. Catalysis depends on residues histidine 387 and lysine 515.

This sequence belongs to the GPI family.

Its subcellular location is the cytoplasm. It catalyses the reaction alpha-D-glucose 6-phosphate = beta-D-fructose 6-phosphate. It functions in the pathway carbohydrate biosynthesis; gluconeogenesis. Its pathway is carbohydrate degradation; glycolysis; D-glyceraldehyde 3-phosphate and glycerone phosphate from D-glucose: step 2/4. Functionally, catalyzes the reversible isomerization of glucose-6-phosphate to fructose-6-phosphate. The sequence is that of Glucose-6-phosphate isomerase from Photobacterium profundum (strain SS9).